Here is a 400-residue protein sequence, read N- to C-terminus: CCA-adding enzyme (400 aa).

The ATP site is built by glycine 28 and arginine 31. CTP-binding residues include glycine 28 and arginine 31. Residues aspartate 41 and aspartate 43 each coordinate Mg(2+). ATP contacts are provided by arginine 112, aspartate 155, arginine 158, arginine 161, and arginine 164. CTP is bound by residues arginine 112, aspartate 155, arginine 158, arginine 161, and arginine 164.

Belongs to the tRNA nucleotidyltransferase/poly(A) polymerase family. Bacterial CCA-adding enzyme type 3 subfamily. In terms of assembly, homodimer. Requires Mg(2+) as cofactor.

It catalyses the reaction a tRNA precursor + 2 CTP + ATP = a tRNA with a 3' CCA end + 3 diphosphate. The enzyme catalyses a tRNA with a 3' CCA end + 2 CTP + ATP = a tRNA with a 3' CCACCA end + 3 diphosphate. Catalyzes the addition and repair of the essential 3'-terminal CCA sequence in tRNAs without using a nucleic acid template. Adds these three nucleotides in the order of C, C, and A to the tRNA nucleotide-73, using CTP and ATP as substrates and producing inorganic pyrophosphate. tRNA 3'-terminal CCA addition is required both for tRNA processing and repair. Also involved in tRNA surveillance by mediating tandem CCA addition to generate a CCACCA at the 3' terminus of unstable tRNAs. While stable tRNAs receive only 3'-terminal CCA, unstable tRNAs are marked with CCACCA and rapidly degraded. This chain is CCA-adding enzyme, found in Staphylococcus aureus (strain Mu3 / ATCC 700698).